Here is an 804-residue protein sequence, read N- to C-terminus: Ion-translocating oxidoreductase complex subunit C (804 aa).

2 4Fe-4S ferredoxin-type domains span residues 366–397 (SEMG…QQLY) and 407–436 (KARA…VQYY). 8 residues coordinate [4Fe-4S] cluster: C377, C380, C383, C387, C416, C419, C422, and C426. Disordered stretches follow at residues 466–532 (RLER…EVRV) and 567–804 (KAAQ…MQED). Composition is skewed to low complexity over residues 484–495 (SVASSDAGAIAA), 567–582 (KAAQ…APQQ), 592–619 (AAVA…EAPQ), 629–660 (KAAV…QQSA), 668–693 (AAVA…ATEA), 706–731 (AAVA…ATEA), and 744–769 (AAVA…ATEA).

This sequence belongs to the 4Fe4S bacterial-type ferredoxin family. RnfC subfamily. As to quaternary structure, the complex is composed of six subunits: RnfA, RnfB, RnfC, RnfD, RnfE and RnfG. [4Fe-4S] cluster is required as a cofactor.

Its subcellular location is the cell inner membrane. In terms of biological role, part of a membrane-bound complex that couples electron transfer with translocation of ions across the membrane. This is Ion-translocating oxidoreductase complex subunit C from Erwinia tasmaniensis (strain DSM 17950 / CFBP 7177 / CIP 109463 / NCPPB 4357 / Et1/99).